Reading from the N-terminus, the 130-residue chain is Arsenate reductase 2.2 (130 aa).

The region spanning 18–119 (RDPRIAVVDV…WELSGRPVCR (102 aa)) is the Rhodanese domain. Cys-70 functions as the Cysteine persulfide intermediate in the catalytic mechanism.

The catalysed reaction is [glutaredoxin]-dithiol + arsenate + glutathione + H(+) = glutathionyl-S-S-[glutaredoxin] + arsenite + H2O. Functionally, possesses arsenate reductase activity in vitro. Catalyzes the reduction of arsenate [As(V)] to arsenite [As(III)]. May play a role in arsenic retention in roots. Its function is as follows. Possesses phosphatase activity towards p-nitrophenyl phosphate in vitro. The chain is Arsenate reductase 2.2 (ACR2.2) from Oryza sativa subsp. japonica (Rice).